A 241-amino-acid polypeptide reads, in one-letter code: Ribonuclease P protein component 3 (241 aa).

This sequence belongs to the eukaryotic/archaeal RNase P protein component 3 family. As to quaternary structure, consists of a catalytic RNA component and at least 4-5 protein subunits.

It localises to the cytoplasm. It catalyses the reaction Endonucleolytic cleavage of RNA, removing 5'-extranucleotides from tRNA precursor.. Its function is as follows. Part of ribonuclease P, a protein complex that generates mature tRNA molecules by cleaving their 5'-ends. This chain is Ribonuclease P protein component 3, found in Methanococcoides burtonii (strain DSM 6242 / NBRC 107633 / OCM 468 / ACE-M).